A 355-amino-acid chain; its full sequence is Replication-associated protein (355 aa).

In terms of domain architecture, CRESS-DNA virus Rep endonuclease spans 11-114; sequence SHRNANTFLT…PLAVFERGTF (104 aa). Residues 18–21 carry the RCR-1 motif; sequence FLTY. Residues E52, H60, and H62 each contribute to the a divalent metal cation site. Positions 60 to 62 match the RCR-2 motif; it reads HLH. Y100 functions as the For DNA cleavage activity in the catalytic mechanism. Residues 100–103 carry the RCR-3 motif; it reads YILK. Residue E104 coordinates a divalent metal cation. Residues 175–187 form an oligomerization region; sequence SANKLFPEIQEEF. 229–236 serves as a coordination point for ATP; sequence GPTRTGKS. Positions 252-270 are transactivation; the sequence is VDWSSYNEDAIYNIVDDIP. Residues 292 to 303 carry the Nuclear localization signal motif; sequence KYGKKKKVQKKS.

Belongs to the geminiviridae Rep protein family. In terms of assembly, homooligomer. Rep binds to repeated DNA motifs (iterons). Forms the O-complex, which is a Rep-DNA complex involved in the initiation of RCR. Part of the C- and V-complexes which are RepA-Rep-DNA complexes involved in the c-sense and v-sense transcription. The cofactor is Mg(2+). Mn(2+) serves as cofactor.

It localises to the host nucleus. Essential for the replication of viral ssDNA. The closed circular ssDNA genome is first converted to a superhelical dsDNA. Rep binds a specific region at the genome origin of replication. It introduces an endonucleolytic nick within the conserved sequence 5'-TAATATTAC-3' in the intergenic region of the genome present in all geminiviruses, thereby initiating the rolling circle replication (RCR). Following cleavage, binds covalently to the 5'-phosphate of DNA as a tyrosyl ester. The cleavage gives rise to a free 3'-OH that serves as a primer for the cellular DNA polymerase. The polymerase synthesizes the (+) strand DNA by rolling circle mechanism. After one round of replication, a Rep-catalyzed nucleotidyl transfer reaction releases a circular single-stranded virus genome, thereby terminating the replication. Displays origin-specific DNA cleavage, nucleotidyl transferase, ATPase and helicase activities. Acts as an inhibitor of C-sense gene transcription. This is Replication-associated protein from Maize streak virus genotype A (isolate South Africa) (MSV).